The sequence spans 91 residues: Acylphosphatase (91 aa).

Positions 3–91 (KLRMNVQGRV…EETEQFKVIQ (89 aa)) constitute an Acylphosphatase-like domain. Catalysis depends on residues Arg18 and Asn36.

Belongs to the acylphosphatase family.

The enzyme catalyses an acyl phosphate + H2O = a carboxylate + phosphate + H(+). The sequence is that of Acylphosphatase (acyP) from Enterococcus faecalis (strain ATCC 700802 / V583).